A 334-amino-acid chain; its full sequence is MTIRLAINGFGRIGRNVLRALYTGHYREQLQVVAINDLGDAAVNAHLFQYDSVHGHFPGEVEHDAESLRVMGDRIAVSAIRNPAELPWKSLGVDIVLECTGLFTSRDKAAAHLQAGAGKVLISAPGKDVEATVVYGVNHEVLRASHRIVSNASCTTNCLAPVAQVLHRELGIEHGLMTTIHAYTNDQNLSDVYHPDLYRARSATQSMIPTKTGAAEAVGLVLPELAGKLTGLAVRVPVINVSLVDLTVQVARDTSVDEVNRLLREASEGSPVLGYNTQPLVSVDFNHDPRSSIFDANHTKVSGRLVKAMAWYDNEWGFSNRMLDSALALAAARD.

Residues arginine 12 to isoleucine 13, aspartate 37, arginine 81, and serine 123 each bind NAD(+). Residues serine 153 to threonine 155 and threonine 184 each bind D-glyceraldehyde 3-phosphate. The active-site Nucleophile is cysteine 154. Asparagine 185 contacts NAD(+). Residues arginine 199, threonine 212–glycine 213, and arginine 235 each bind D-glyceraldehyde 3-phosphate. Asparagine 314 is an NAD(+) binding site.

The protein belongs to the glyceraldehyde-3-phosphate dehydrogenase family. As to quaternary structure, homotetramer.

It localises to the cytoplasm. The catalysed reaction is D-glyceraldehyde 3-phosphate + phosphate + NAD(+) = (2R)-3-phospho-glyceroyl phosphate + NADH + H(+). It functions in the pathway carbohydrate degradation; glycolysis; pyruvate from D-glyceraldehyde 3-phosphate: step 1/5. In terms of biological role, catalyzes the oxidative phosphorylation of glyceraldehyde 3-phosphate (G3P) to 1,3-bisphosphoglycerate (BPG) using the cofactor NAD. The first reaction step involves the formation of a hemiacetal intermediate between G3P and a cysteine residue, and this hemiacetal intermediate is then oxidized to a thioester, with concomitant reduction of NAD to NADH. The reduced NADH is then exchanged with the second NAD, and the thioester is attacked by a nucleophilic inorganic phosphate to produce BPG. The polypeptide is Glyceraldehyde-3-phosphate dehydrogenase (gap) (Pseudomonas aeruginosa (strain ATCC 15692 / DSM 22644 / CIP 104116 / JCM 14847 / LMG 12228 / 1C / PRS 101 / PAO1)).